The chain runs to 119 residues: MARVKGGVVSRKRRKRILKLAKGYYGAKHILFRTAKEQVMNSYYYAYRDRRQKKRDFRKLWITRINAAARMNGLSYSQLMHGLKLADIEVNRKMLADLAVNDAAGFTALADAAKDKLAK.

It belongs to the bacterial ribosomal protein bL20 family.

Its function is as follows. Binds directly to 23S ribosomal RNA and is necessary for the in vitro assembly process of the 50S ribosomal subunit. It is not involved in the protein synthesizing functions of that subunit. The polypeptide is Large ribosomal subunit protein bL20 (Streptococcus uberis (strain ATCC BAA-854 / 0140J)).